The following is a 383-amino-acid chain: 3-dehydroquinate synthase (383 aa).

NAD(+)-binding positions include 81–86 (EGEVSK), 115–119 (GVVGD), 139–140 (TS), Lys-152, and Lys-161. Zn(2+) contacts are provided by Glu-194, His-256, and His-274.

The protein belongs to the sugar phosphate cyclases superfamily. Dehydroquinate synthase family. Requires Co(2+) as cofactor. It depends on Zn(2+) as a cofactor. NAD(+) is required as a cofactor.

It is found in the cytoplasm. It carries out the reaction 7-phospho-2-dehydro-3-deoxy-D-arabino-heptonate = 3-dehydroquinate + phosphate. Its pathway is metabolic intermediate biosynthesis; chorismate biosynthesis; chorismate from D-erythrose 4-phosphate and phosphoenolpyruvate: step 2/7. Catalyzes the conversion of 3-deoxy-D-arabino-heptulosonate 7-phosphate (DAHP) to dehydroquinate (DHQ). This is 3-dehydroquinate synthase from Nitrobacter hamburgensis (strain DSM 10229 / NCIMB 13809 / X14).